Consider the following 576-residue polypeptide: Chaperonin CPN60-2, mitochondrial (576 aa).

The N-terminal 34 residues, 1 to 34 (MYRAAASLASKARQAGSSSAARQVGSRLAWSRNY), are a transit peptide targeting the mitochondrion.

The protein belongs to the chaperonin (HSP60) family.

The protein localises to the mitochondrion. In terms of biological role, implicated in mitochondrial protein import and macromolecular assembly. May facilitate the correct folding of imported proteins. May also prevent misfolding and promote the refolding and proper assembly of unfolded polypeptides generated under stress conditions in the mitochondrial matrix. This Zea mays (Maize) protein is Chaperonin CPN60-2, mitochondrial (CPN60II).